We begin with the raw amino-acid sequence, 420 residues long: F-box/LRR-repeat protein At2g43260 (420 aa).

Positions 7 to 53 constitute an F-box domain; it reads NPNSIDILPELLEEVLLRLPTKSILKCRIVSKQWRSLLESSRFAERH. LRR repeat units lie at residues 112-135 and 226-251; these read QDWIIVLNPSTSQLRRFPSGLNHN and VYRILALDLHKEEFHKVPVPPTQITV.

The sequence is that of F-box/LRR-repeat protein At2g43260 from Arabidopsis thaliana (Mouse-ear cress).